A 312-amino-acid polypeptide reads, in one-letter code: Methionyl-tRNA formyltransferase (312 aa).

Serine 109–proline 112 lines the (6S)-5,6,7,8-tetrahydrofolate pocket.

This sequence belongs to the Fmt family.

It catalyses the reaction L-methionyl-tRNA(fMet) + (6R)-10-formyltetrahydrofolate = N-formyl-L-methionyl-tRNA(fMet) + (6S)-5,6,7,8-tetrahydrofolate + H(+). Attaches a formyl group to the free amino group of methionyl-tRNA(fMet). The formyl group appears to play a dual role in the initiator identity of N-formylmethionyl-tRNA by promoting its recognition by IF2 and preventing the misappropriation of this tRNA by the elongation apparatus. This chain is Methionyl-tRNA formyltransferase, found in Ruminiclostridium cellulolyticum (strain ATCC 35319 / DSM 5812 / JCM 6584 / H10) (Clostridium cellulolyticum).